A 126-amino-acid chain; its full sequence is Larval cuticle protein 2 (126 aa).

The first 16 residues, 1-16 (MFKFVMVFAVLGLAAA), serve as a signal peptide directing secretion. One can recognise a Chitin-binding type R&amp;R domain in the interval 39 to 100 (ADGFDTDLVV…PVGAVLPTPP (62 aa)).

Functionally, component of the larval cuticle. The polypeptide is Larval cuticle protein 2 (Lcp2) (Drosophila miranda (Fruit fly)).